Consider the following 577-residue polypeptide: Proline--tRNA ligase (577 aa).

This sequence belongs to the class-II aminoacyl-tRNA synthetase family. ProS type 1 subfamily. As to quaternary structure, homodimer.

It is found in the cytoplasm. The catalysed reaction is tRNA(Pro) + L-proline + ATP = L-prolyl-tRNA(Pro) + AMP + diphosphate. Functionally, catalyzes the attachment of proline to tRNA(Pro) in a two-step reaction: proline is first activated by ATP to form Pro-AMP and then transferred to the acceptor end of tRNA(Pro). As ProRS can inadvertently accommodate and process non-cognate amino acids such as alanine and cysteine, to avoid such errors it has two additional distinct editing activities against alanine. One activity is designated as 'pretransfer' editing and involves the tRNA(Pro)-independent hydrolysis of activated Ala-AMP. The other activity is designated 'posttransfer' editing and involves deacylation of mischarged Ala-tRNA(Pro). The misacylated Cys-tRNA(Pro) is not edited by ProRS. This chain is Proline--tRNA ligase, found in Helicobacter pylori (strain P12).